The primary structure comprises 389 residues: Apoptosis inhibitor U19 (389 aa).

This sequence belongs to the beta-herpesvirinae UL38 protein family. In terms of assembly, interacts with host MDM2; this interaction leads to the stabilization of host TP53.

Its subcellular location is the host cytoplasm. It localises to the host nucleus. Its function is as follows. Plays a role in the inhibition of host apoptosis to facilitate efficient viral replication. Promotes stabilization and inactivation of host TP53 through interaction with host MDM2. This is Apoptosis inhibitor U19 (U19) from Human herpesvirus 6A (strain Uganda-1102) (HHV-6 variant A).